Consider the following 470-residue polypeptide: Nuclear receptor subfamily 0 group B member 1 (470 aa).

3 tandem repeats follow at residues 1 to 67 (MAGE…YRCC), 68 to 133 (FCGK…YRCC), and 134 to 200 (FCGE…YRCC). The interval 1–253 (MAGENHQWQG…RPVALKSPQV (253 aa)) is 4 X 67 AA tandem repeats. 3 consecutive short sequence motifs (LXXLL motif) follow at residues 13–17 (LYNML), 80–84 (LYSML), and 146–150 (LYSLL). One copy of the 4; truncated repeat lies at 201 to 253 (FCGEDHPQQGSTLYCVPTSTNQAQAAPEERPRAPWWDTSSGALRPVALKSPQV). The NR LBD domain maps to 205 to 469 (DHPQQGSTLY…DMMLEMLCTK (265 aa)). Residues 461–466 (MMLEML) carry the AF-2 motif motif.

It belongs to the nuclear hormone receptor family. NR0 subfamily. As to quaternary structure, homodimer. Interacts with NR5A1, NR5A2, NR0B2 and with COPS2. Interacts with ESRRB; represses ESRRB activity at the GATA6 promoter.

It is found in the nucleus. It localises to the cytoplasm. Nuclear receptor that lacks a DNA-binding domain and acts as a corepressor that inhibits the transcriptional activity of other nuclear receptors through heterodimeric interactions. Component of a cascade required for the development of the hypothalamic-pituitary-adrenal-gonadal axis. May also have a role in the development of the embryo and in the maintenance of embryonic stem cell pluripotency. The protein is Nuclear receptor subfamily 0 group B member 1 (NR0B1) of Homo sapiens (Human).